The chain runs to 609 residues: UvrABC system protein C (609 aa).

Positions 16-94 constitute a GIY-YIG domain; that stretch reads SSAGVYRMYD…IKQYMPKYNV (79 aa). The region spanning 203-238 is the UVR domain; sequence QQVISTLVAKMEQAAQQQEYEQAARFRDQIMALRKV.

The protein belongs to the UvrC family. Interacts with UvrB in an incision complex.

It localises to the cytoplasm. Its function is as follows. The UvrABC repair system catalyzes the recognition and processing of DNA lesions. UvrC both incises the 5' and 3' sides of the lesion. The N-terminal half is responsible for the 3' incision and the C-terminal half is responsible for the 5' incision. This is UvrABC system protein C from Shewanella putrefaciens (strain CN-32 / ATCC BAA-453).